Here is a 142-residue protein sequence, read N- to C-terminus: MLSPRRTKFRKQQRGRMGGLAHRGSTLNFGDFALQAQEPAWITSRQIEASRRAMTRYIRRGGKIWIRIFPDKPVTMRPAETRMGSGKGNPEFWVAVVKPGRILFEIAGVTEEIAREAMRLAAYKLPIKTKFIVRSQVVEEQE.

The protein belongs to the universal ribosomal protein uL16 family. Part of the 50S ribosomal subunit.

Functionally, binds 23S rRNA and is also seen to make contacts with the A and possibly P site tRNAs. This chain is Large ribosomal subunit protein uL16, found in Trichormus variabilis (strain ATCC 29413 / PCC 7937) (Anabaena variabilis).